Reading from the N-terminus, the 100-residue chain is UPF0125 protein CV_3462 (100 aa).

It belongs to the UPF0125 (RnfH) family.

This Chromobacterium violaceum (strain ATCC 12472 / DSM 30191 / JCM 1249 / CCUG 213 / NBRC 12614 / NCIMB 9131 / NCTC 9757 / MK) protein is UPF0125 protein CV_3462.